Here is a 339-residue protein sequence, read N- to C-terminus: Biotin synthase (339 aa).

Positions 47-276 (FYGKKVKLNM…SKEIRISGGR (230 aa)) constitute a Radical SAM core domain. Cys65, Cys69, and Cys72 together coordinate [4Fe-4S] cluster. [2Fe-2S] cluster-binding residues include Cys109, Cys141, Cys201, and Arg271.

The protein belongs to the radical SAM superfamily. Biotin synthase family. In terms of assembly, homodimer. [4Fe-4S] cluster is required as a cofactor. [2Fe-2S] cluster serves as cofactor.

It catalyses the reaction (4R,5S)-dethiobiotin + (sulfur carrier)-SH + 2 reduced [2Fe-2S]-[ferredoxin] + 2 S-adenosyl-L-methionine = (sulfur carrier)-H + biotin + 2 5'-deoxyadenosine + 2 L-methionine + 2 oxidized [2Fe-2S]-[ferredoxin]. The protein operates within cofactor biosynthesis; biotin biosynthesis; biotin from 7,8-diaminononanoate: step 2/2. Its function is as follows. Catalyzes the conversion of dethiobiotin (DTB) to biotin by the insertion of a sulfur atom into dethiobiotin via a radical-based mechanism. The sequence is that of Biotin synthase from Bacillus velezensis (strain DSM 23117 / BGSC 10A6 / LMG 26770 / FZB42) (Bacillus amyloliquefaciens subsp. plantarum).